The sequence spans 129 residues: Glycine cleavage system H protein (129 aa).

The 83-residue stretch at 23 to 105 folds into the Lipoyl-binding domain; sequence SAVVGITEHA…YGEGWLAKFS (83 aa). N6-lipoyllysine is present on lysine 64.

Belongs to the GcvH family. As to quaternary structure, the glycine cleavage system is composed of four proteins: P, T, L and H. (R)-lipoate serves as cofactor.

The glycine cleavage system catalyzes the degradation of glycine. The H protein shuttles the methylamine group of glycine from the P protein to the T protein. The protein is Glycine cleavage system H protein of Herpetosiphon aurantiacus (strain ATCC 23779 / DSM 785 / 114-95).